A 622-amino-acid polypeptide reads, in one-letter code: Elongation factor 4 (622 aa).

The tr-type G domain maps to 17–201 (ALIRNFCIIA…KVVAEVPAPV (185 aa)). Residues 29–34 (DHGKST) and 148–151 (NKID) each bind GTP.

Belongs to the TRAFAC class translation factor GTPase superfamily. Classic translation factor GTPase family. LepA subfamily.

The protein resides in the cell membrane. It catalyses the reaction GTP + H2O = GDP + phosphate + H(+). Functionally, required for accurate and efficient protein synthesis under certain stress conditions. May act as a fidelity factor of the translation reaction, by catalyzing a one-codon backward translocation of tRNAs on improperly translocated ribosomes. Back-translocation proceeds from a post-translocation (POST) complex to a pre-translocation (PRE) complex, thus giving elongation factor G a second chance to translocate the tRNAs correctly. Binds to ribosomes in a GTP-dependent manner. In Streptomyces avermitilis (strain ATCC 31267 / DSM 46492 / JCM 5070 / NBRC 14893 / NCIMB 12804 / NRRL 8165 / MA-4680), this protein is Elongation factor 4.